Consider the following 322-residue polypeptide: MKKIAILTSGGDASTMNKCLSTFITYASKYNCEVVFVKNGYKGIYDNEFVKPDYTETKSWWSLPGTKIYSSRFPEILDEQVRKQMVDNLHKNSIDTLVVIGGDGSYKGARLLSKSGIKVIGLPGTIDNDIASTSYSIGFDTSLNAIVNSIKEIKSCMDSHANVAMIEIMGRHCIDLTVFAGIATEADIIITPESFYTPQQLLAKINEKRKTNSRGIIILYVELLLGTENIPTVEEYIKYIQANSKESVKKNILGYLQRGGNPTAMDMIRASLMTEHALKMISENQYNKIIGVDEFKVVSYDLETAINMKNPSRKDLIDKFFN.

ATP-binding positions include Gly11, 72-73 (RF), and 102-105 (GDGS). Asp103 is a Mg(2+) binding site. Substrate contacts are provided by residues 125 to 127 (TID), 169 to 171 (MGR), Glu222, Lys249, and 255 to 258 (YLQR). Asp127 (proton acceptor) is an active-site residue.

It belongs to the phosphofructokinase type A (PFKA) family. As to quaternary structure, homotetramer. Requires Mg(2+) as cofactor.

The protein resides in the cytoplasm. The enzyme catalyses beta-D-fructose 6-phosphate + ATP = beta-D-fructose 1,6-bisphosphate + ADP + H(+). Its pathway is carbohydrate degradation; glycolysis; D-glyceraldehyde 3-phosphate and glycerone phosphate from D-glucose: step 3/4. Functionally, catalyzes the phosphorylation of D-fructose 6-phosphate to fructose 1,6-bisphosphate by ATP, the first committing step of glycolysis. This is Probable ATP-dependent 6-phosphofructokinase (pfkA) from Malacoplasma penetrans (strain HF-2) (Mycoplasma penetrans).